The primary structure comprises 493 residues: Telomere-binding protein subunit alpha (493 aa).

The disordered stretch occupies residues 1 to 30; that stretch reads MSSAKRSTSRVSKKKAAPAKDGAPKKREQS. Residues 7 to 17 show a composition bias toward basic residues; sequence STSRVSKKKAA.

This sequence belongs to the telombin family. Heterodimer of an alpha and a beta subunit.

The protein resides in the nucleus. The protein localises to the chromosome. It is found in the telomere. In terms of biological role, may function as protective capping of the single-stranded telomeric overhang. May also participate in telomere length regulation during DNA replication. This Stylonychia mytilus (Ciliate) protein is Telomere-binding protein subunit alpha (STY56V).